A 669-amino-acid polypeptide reads, in one-letter code: DNA ligase (669 aa).

Residues 34–38 (DAEYD), 83–84 (SL), and E114 contribute to the NAD(+) site. The active-site N6-AMP-lysine intermediate is K116. NAD(+) is bound by residues R137, E171, K287, and K311. 4 residues coordinate Zn(2+): C405, C408, C423, and C428. Residues 591–669 (NVESYFAGKT…EERFLQELNK (79 aa)) form the BRCT domain.

This sequence belongs to the NAD-dependent DNA ligase family. LigA subfamily. Requires Mg(2+) as cofactor. The cofactor is Mn(2+).

The catalysed reaction is NAD(+) + (deoxyribonucleotide)n-3'-hydroxyl + 5'-phospho-(deoxyribonucleotide)m = (deoxyribonucleotide)n+m + AMP + beta-nicotinamide D-nucleotide.. DNA ligase that catalyzes the formation of phosphodiester linkages between 5'-phosphoryl and 3'-hydroxyl groups in double-stranded DNA using NAD as a coenzyme and as the energy source for the reaction. It is essential for DNA replication and repair of damaged DNA. This chain is DNA ligase, found in Bacillus cereus (strain ATCC 10987 / NRS 248).